The chain runs to 184 residues: Putative serine carboxypeptidase-like 52 (184 aa).

An N-terminal signal peptide occupies residues 1–22 (MRTFSPKLLLLLLLVLRHHAES). Asn93 is a glycosylation site (N-linked (GlcNAc...) asparagine).

This sequence belongs to the peptidase S10 family.

Its subcellular location is the secreted. This is Putative serine carboxypeptidase-like 52 (SCPL52) from Arabidopsis thaliana (Mouse-ear cress).